The chain runs to 360 residues: Flavin-dependent trigonelline monooxygenase, oxygenase component (360 aa).

The protein belongs to the bacterial luciferase oxidoreductase family. As to quaternary structure, homodimer. The trigonelline monooxygenase is composed of a reductase component TgnA and an oxygenase component TgnB.

The enzyme catalyses N-methylnicotinate + FMNH2 + O2 = (Z)-2-((N-methylformamido)methylene)-5-hydroxybutanolactone + FMN + H(+). It carries out the reaction N-methylnicotinate + FADH2 + O2 = (Z)-2-((N-methylformamido)methylene)-5-hydroxybutanolactone + FAD + H(+). In terms of biological role, involved in the degradation of the pyridine ring of trigonelline (TG; N-methylnicotinate) into succinate and methylamine as carbon and nitrogen sources, respectively. Catalyzes the insertion of two oxygens, followed by a ring cleavage of trigonelline to yield (Z)-2-((N-methylformamido)methylene)-5-hydroxybutyrolactone (MFMB). It is able to use reduced FMN or FAD. This is Flavin-dependent trigonelline monooxygenase, oxygenase component from Acinetobacter baylyi (strain ATCC 33305 / BD413 / ADP1).